A 163-amino-acid chain; its full sequence is Large ribosomal subunit protein uL15 (163 aa).

Belongs to the universal ribosomal protein uL15 family. Part of the 50S ribosomal subunit.

Binds to the 23S rRNA. The protein is Large ribosomal subunit protein uL15 of Orientia tsutsugamushi (strain Ikeda) (Rickettsia tsutsugamushi).